Reading from the N-terminus, the 607-residue chain is UvrABC system protein C (607 aa).

The GIY-YIG domain maps to 16–94; the sequence is GRPGVYRMFD…IKEWRPPYNI (79 aa). Residues 203–238 form the UVR domain; the sequence is QQLGNELNAEMEKAAMALNFEKAAELRDQIALLRRV.

It belongs to the UvrC family. As to quaternary structure, interacts with UvrB in an incision complex.

The protein resides in the cytoplasm. The UvrABC repair system catalyzes the recognition and processing of DNA lesions. UvrC both incises the 5' and 3' sides of the lesion. The N-terminal half is responsible for the 3' incision and the C-terminal half is responsible for the 5' incision. This is UvrABC system protein C from Pseudomonas entomophila (strain L48).